Consider the following 262-residue polypeptide: Thiazole synthase (262 aa).

Lys104 functions as the Schiff-base intermediate with DXP in the catalytic mechanism. Residues Gly165, 191–192 (AG), and 213–214 (NT) contribute to the 1-deoxy-D-xylulose 5-phosphate site.

The protein belongs to the ThiG family. As to quaternary structure, homotetramer. Forms heterodimers with either ThiH or ThiS.

It localises to the cytoplasm. The enzyme catalyses [ThiS sulfur-carrier protein]-C-terminal-Gly-aminoethanethioate + 2-iminoacetate + 1-deoxy-D-xylulose 5-phosphate = [ThiS sulfur-carrier protein]-C-terminal Gly-Gly + 2-[(2R,5Z)-2-carboxy-4-methylthiazol-5(2H)-ylidene]ethyl phosphate + 2 H2O + H(+). It functions in the pathway cofactor biosynthesis; thiamine diphosphate biosynthesis. Its function is as follows. Catalyzes the rearrangement of 1-deoxy-D-xylulose 5-phosphate (DXP) to produce the thiazole phosphate moiety of thiamine. Sulfur is provided by the thiocarboxylate moiety of the carrier protein ThiS. In vitro, sulfur can be provided by H(2)S. This Alkalilimnicola ehrlichii (strain ATCC BAA-1101 / DSM 17681 / MLHE-1) protein is Thiazole synthase.